A 412-amino-acid chain; its full sequence is Putative gustatory receptor 58c (412 aa).

2 helical membrane passes run valine 39 to valine 59 and methionine 72 to methionine 92. N-linked (GlcNAc...) asparagine glycosylation occurs at asparagine 158. A helical transmembrane segment spans residues isoleucine 173 to valine 193. Asparagine 203 carries an N-linked (GlcNAc...) asparagine glycan. The next 3 helical transmembrane spans lie at isoleucine 224–tryptophan 241, valine 262–isoleucine 282, and isoleucine 296–phenylalanine 316. N-linked (GlcNAc...) asparagine glycans are attached at residues asparagine 337, asparagine 386, and asparagine 391.

Belongs to the insect chemoreceptor superfamily. Gustatory receptor (GR) family. Gr10a subfamily.

It localises to the cell membrane. Functionally, probable gustatory receptor which mediates acceptance or avoidance behavior, depending on its substrates. This Drosophila melanogaster (Fruit fly) protein is Putative gustatory receptor 58c (Gr58c).